The following is a 290-amino-acid chain: UPF0507 protein YML003W (290 aa).

It belongs to the UPF0507 family.

The protein is UPF0507 protein YML003W of Saccharomyces cerevisiae (strain ATCC 204508 / S288c) (Baker's yeast).